A 133-amino-acid chain; its full sequence is Small ribosomal subunit protein uS8c (133 aa).

The protein belongs to the universal ribosomal protein uS8 family. Part of the 30S ribosomal subunit.

The protein resides in the plastid. It is found in the chloroplast. Functionally, one of the primary rRNA binding proteins, it binds directly to 16S rRNA central domain where it helps coordinate assembly of the platform of the 30S subunit. This chain is Small ribosomal subunit protein uS8c (rps8), found in Mesostigma viride (Green alga).